A 483-amino-acid polypeptide reads, in one-letter code: Glutamyl-tRNA(Gln) amidotransferase subunit A (483 aa).

Residues Lys-76 and Ser-151 each act as charge relay system in the active site. The active-site Acyl-ester intermediate is the Ser-175.

This sequence belongs to the amidase family. GatA subfamily. Heterotrimer of A, B and C subunits.

It catalyses the reaction L-glutamyl-tRNA(Gln) + L-glutamine + ATP + H2O = L-glutaminyl-tRNA(Gln) + L-glutamate + ADP + phosphate + H(+). Functionally, allows the formation of correctly charged Gln-tRNA(Gln) through the transamidation of misacylated Glu-tRNA(Gln) in organisms which lack glutaminyl-tRNA synthetase. The reaction takes place in the presence of glutamine and ATP through an activated gamma-phospho-Glu-tRNA(Gln). This is Glutamyl-tRNA(Gln) amidotransferase subunit A from Chromobacterium violaceum (strain ATCC 12472 / DSM 30191 / JCM 1249 / CCUG 213 / NBRC 12614 / NCIMB 9131 / NCTC 9757 / MK).